The sequence spans 1755 residues: Transposon Ty1-ER2 Gag-Pol polyprotein (1755 aa).

Composition is skewed to polar residues over residues 1 to 10 (MESQQLSNYP), 48 to 60 (TKANSQQTTTPAS), and 127 to 152 (QSQFPQYPSSVGTPLSTPSPESGNTF). Disordered stretches follow at residues 1–93 (MESQ…MMTQ), 126–173 (PQSQ…RPPP), and 352–421 (GSRN…SKST). Residues 153-165 (TDSSSADSDMTST) are compositionally biased toward low complexity. The RNA-binding stretch occupies residues 299–401 (NNGIHINNKV…NSKSKTARAH (103 aa)). Positions 402–418 (NVSTSNNSPSTDNDSIS) are enriched in low complexity. Asp461 (for protease activity; shared with dimeric partner) is an active-site residue. The tract at residues 583–640 (NVHTSESTRKYPYPFIHRMLAHANAQTIRYSLKNNTITYFNESDVDWSSAIDYQCPDC) is integrase-type zinc finger-like. Residues 660–835 (NSYEPFQYLH…AGLDISTLLP (176 aa)) enclose the Integrase catalytic domain. Positions 671 and 736 each coordinate Mg(2+). A disordered region spans residues 958-1170 (AVSPTDSTPP…SSLGGIGDSN (213 aa)). The segment covering 960–969 (SPTDSTPPST) has biased composition (low complexity). The segment covering 1005-1015 (STPQISDIEST) has biased composition (polar residues). Positions 1038-1053 (ESSHASKSKDFRHSDS) are enriched in basic and acidic residues. Composition is skewed to polar residues over residues 1054-1082 (YSDNETNHTNVPISSTGGTNNKTVPQTSE) and 1095-1106 (SIDTSSSESNSL). Positions 1178–1212 (KKRSLEDNETEIKVSRDTWNTKNMRSLEPPRSKKR) match the Bipartite nuclear localization signal motif. The Reverse transcriptase Ty1/copia-type domain maps to 1338–1476 (NNYYITQLDI…DILGLEIKYQ (139 aa)). Mg(2+) is bound by residues Asp1346, Asp1427, Asp1428, Asp1610, Glu1652, and Asp1685. Residues 1610–1752 (DASYGNQPYY…IKTFKLLTNK (143 aa)) enclose the RNase H Ty1/copia-type domain.

The capsid protein forms a homotrimer, from which the VLPs are assembled. The protease is a homodimer, whose active site consists of two apposed aspartic acid residues. In terms of processing, initially, virus-like particles (VLPs) are composed of the structural unprocessed proteins Gag and Gag-Pol, and also contain the host initiator methionine tRNA (tRNA(i)-Met) which serves as a primer for minus-strand DNA synthesis, and a dimer of genomic Ty RNA. Processing of the polyproteins occurs within the particle and proceeds by an ordered pathway, called maturation. First, the protease (PR) is released by autocatalytic cleavage of the Gag-Pol polyprotein yielding capsid protein p45 and a Pol-p154 precursor protein. This cleavage is a prerequisite for subsequent processing of Pol-p154 at the remaining sites to release the mature structural and catalytic proteins. Maturation takes place prior to the RT reaction and is required to produce transposition-competent VLPs.

The protein resides in the cytoplasm. The protein localises to the nucleus. It carries out the reaction DNA(n) + a 2'-deoxyribonucleoside 5'-triphosphate = DNA(n+1) + diphosphate. The enzyme catalyses Endonucleolytic cleavage to 5'-phosphomonoester.. Functionally, capsid protein (CA) is the structural component of the virus-like particle (VLP), forming the shell that encapsulates the retrotransposons dimeric RNA genome. The particles are assembled from trimer-clustered units and there are holes in the capsid shells that allow for the diffusion of macromolecules. CA also has nucleocapsid-like chaperone activity, promoting primer tRNA(i)-Met annealing to the multipartite primer-binding site (PBS), dimerization of Ty1 RNA and initiation of reverse transcription. In terms of biological role, the aspartyl protease (PR) mediates the proteolytic cleavages of the Gag and Gag-Pol polyproteins after assembly of the VLP. Reverse transcriptase/ribonuclease H (RT) is a multifunctional enzyme that catalyzes the conversion of the retro-elements RNA genome into dsDNA within the VLP. The enzyme displays a DNA polymerase activity that can copy either DNA or RNA templates, and a ribonuclease H (RNase H) activity that cleaves the RNA strand of RNA-DNA heteroduplexes during plus-strand synthesis and hydrolyzes RNA primers. The conversion leads to a linear dsDNA copy of the retrotransposon that includes long terminal repeats (LTRs) at both ends. Its function is as follows. Integrase (IN) targets the VLP to the nucleus, where a subparticle preintegration complex (PIC) containing at least integrase and the newly synthesized dsDNA copy of the retrotransposon must transit the nuclear membrane. Once in the nucleus, integrase performs the integration of the dsDNA into the host genome. This is Transposon Ty1-ER2 Gag-Pol polyprotein (TY1B-ER2) from Saccharomyces cerevisiae (strain ATCC 204508 / S288c) (Baker's yeast).